A 240-amino-acid chain; its full sequence is Methylthioribulose-1-phosphate dehydratase (240 aa).

C99 is a binding site for substrate. 2 residues coordinate Zn(2+): H116 and H118. E145 serves as the catalytic Proton donor/acceptor. Residue H201 coordinates Zn(2+).

It belongs to the aldolase class II family. MtnB subfamily. Requires Zn(2+) as cofactor.

It is found in the cytoplasm. It carries out the reaction 5-(methylsulfanyl)-D-ribulose 1-phosphate = 5-methylsulfanyl-2,3-dioxopentyl phosphate + H2O. Its pathway is amino-acid biosynthesis; L-methionine biosynthesis via salvage pathway; L-methionine from S-methyl-5-thio-alpha-D-ribose 1-phosphate: step 2/6. Its function is as follows. Catalyzes the dehydration of methylthioribulose-1-phosphate (MTRu-1-P) into 2,3-diketo-5-methylthiopentyl-1-phosphate (DK-MTP-1-P). This Paracoccidioides brasiliensis (strain Pb03) protein is Methylthioribulose-1-phosphate dehydratase.